The following is a 30-amino-acid chain: Bowman-Birk type proteinase inhibitor 3 (30 aa).

2 cysteine pairs are disulfide-bonded: C9-C24 and C14-C22.

Functionally, inhibits trypsin (IC(50)=4.90 nM) and, to a lesser extent, alpha-chymotrypsin (IC(50)=1.87 uM). This Lathyrus sativus (White vetchling) protein is Bowman-Birk type proteinase inhibitor 3.